Consider the following 740-residue polypeptide: Ion-translocating oxidoreductase complex subunit C (740 aa).

4Fe-4S ferredoxin-type domains follow at residues 369–397 and 407–436; these read GEPQ…QQLY and KATT…VQYF. [4Fe-4S] cluster-binding residues include Cys-377, Cys-380, Cys-383, Cys-387, Cys-416, Cys-419, Cys-422, and Cys-426. The interval 602-718 is disordered; that stretch reads KLEQQQANAE…EEQVDPRKAA (117 aa).

Belongs to the 4Fe4S bacterial-type ferredoxin family. RnfC subfamily. In terms of assembly, the complex is composed of six subunits: RsxA, RsxB, RsxC, RsxD, RsxE and RsxG. Requires [4Fe-4S] cluster as cofactor.

Its subcellular location is the cell inner membrane. In terms of biological role, part of a membrane-bound complex that couples electron transfer with translocation of ions across the membrane. Required to maintain the reduced state of SoxR. This chain is Ion-translocating oxidoreductase complex subunit C, found in Shigella sonnei (strain Ss046).